A 187-amino-acid chain; its full sequence is Endoribonuclease YbeY (187 aa).

Residues His151, His155, and His161 each contribute to the Zn(2+) site.

The protein belongs to the endoribonuclease YbeY family. Zn(2+) is required as a cofactor.

The protein resides in the cytoplasm. Functionally, single strand-specific metallo-endoribonuclease involved in late-stage 70S ribosome quality control and in maturation of the 3' terminus of the 16S rRNA. This chain is Endoribonuclease YbeY, found in Prochlorococcus marinus (strain MIT 9313).